A 185-amino-acid polypeptide reads, in one-letter code: Lipid A acyltransferase PagP (185 aa).

Residues 1 to 14 (MKLKPVLYLLMLLG) form the signal peptide. Cys15 is lipidated: N-palmitoyl cysteine. Residue Cys15 is the site of S-diacylglycerol cysteine attachment. Residues His57, Asp100, and Ser101 contribute to the active site.

The protein belongs to the lipid A palmitoyltransferase family. In terms of assembly, homodimer.

The protein resides in the cell outer membrane. The enzyme catalyses a lipid A + a 1,2-diacyl-sn-glycero-3-phosphocholine = a hepta-acyl lipid A + a 2-acyl-sn-glycero-3-phosphocholine. The catalysed reaction is a lipid IVA + a 1,2-diacyl-sn-glycero-3-phosphocholine = a lipid IVB + a 2-acyl-sn-glycero-3-phosphocholine. It catalyses the reaction a lipid IIA + a 1,2-diacyl-sn-glycero-3-phosphocholine = a lipid IIB + a 2-acyl-sn-glycero-3-phosphocholine. Functionally, transfers a fatty acid residue from the sn-1 position of a phospholipid to the N-linked hydroxyfatty acid chain on the proximal unit of lipid A or its precursors. The sequence is that of Lipid A acyltransferase PagP from Erwinia sp. (strain Ejp617).